A 192-amino-acid chain; its full sequence is Thymidylate kinase (192 aa).

7 to 14 is an ATP binding site; the sequence is GIDCVGKS.

The protein belongs to the thymidylate kinase family.

It carries out the reaction dTMP + ATP = dTDP + ADP. Functionally, phosphorylation of dTMP to form dTDP in both de novo and salvage pathways of dTTP synthesis. In Campylobacter jejuni subsp. jejuni serotype O:2 (strain ATCC 700819 / NCTC 11168), this protein is Thymidylate kinase (tmk).